Here is a 333-residue protein sequence, read N- to C-terminus: Glycerol-3-phosphate dehydrogenase [NAD(P)+] (333 aa).

Positions 14, 34, and 108 each coordinate NADPH. Positions 108, 137, and 139 each coordinate sn-glycerol 3-phosphate. Residue A141 participates in NADPH binding. K193, D247, S257, R258, and N259 together coordinate sn-glycerol 3-phosphate. The active-site Proton acceptor is K193. R258 provides a ligand contact to NADPH. 2 residues coordinate NADPH: L282 and E284.

This sequence belongs to the NAD-dependent glycerol-3-phosphate dehydrogenase family.

Its subcellular location is the cytoplasm. It catalyses the reaction sn-glycerol 3-phosphate + NAD(+) = dihydroxyacetone phosphate + NADH + H(+). The enzyme catalyses sn-glycerol 3-phosphate + NADP(+) = dihydroxyacetone phosphate + NADPH + H(+). Its pathway is membrane lipid metabolism; glycerophospholipid metabolism. Its function is as follows. Catalyzes the reduction of the glycolytic intermediate dihydroxyacetone phosphate (DHAP) to sn-glycerol 3-phosphate (G3P), the key precursor for phospholipid synthesis. This chain is Glycerol-3-phosphate dehydrogenase [NAD(P)+], found in Blochmanniella floridana.